Consider the following 179-residue polypeptide: Peptide deformylase (179 aa).

Fe cation is bound by residues Cys-103 and His-145. Glu-146 is a catalytic residue. Fe cation is bound at residue His-149.

Belongs to the polypeptide deformylase family. Requires Fe(2+) as cofactor.

The enzyme catalyses N-terminal N-formyl-L-methionyl-[peptide] + H2O = N-terminal L-methionyl-[peptide] + formate. Functionally, removes the formyl group from the N-terminal Met of newly synthesized proteins. Requires at least a dipeptide for an efficient rate of reaction. N-terminal L-methionine is a prerequisite for activity but the enzyme has broad specificity at other positions. The chain is Peptide deformylase from Leptospira biflexa serovar Patoc (strain Patoc 1 / Ames).